Consider the following 700-residue polypeptide: Acetyl-coenzyme A carboxylase carboxyl transferase subunit beta, chloroplastic (700 aa).

The Zn(2+) site is built by Cys-34, Cys-37, Cys-53, and Cys-56. The C4-type zinc-finger motif lies at 34–56 (CENCETLIYKKSLLEQKGVCAEC). The CoA carboxyltransferase N-terminal domain occupies 445–700 (KKGRDTKDTE…ETIEIYMYGD (256 aa)).

The protein belongs to the AccD/PCCB family. In terms of assembly, acetyl-CoA carboxylase is a heterohexamer composed of biotin carboxyl carrier protein, biotin carboxylase and 2 subunits each of ACCase subunit alpha and ACCase plastid-coded subunit beta (accD). It depends on Zn(2+) as a cofactor.

It is found in the plastid. The protein localises to the chloroplast stroma. It catalyses the reaction N(6)-carboxybiotinyl-L-lysyl-[protein] + acetyl-CoA = N(6)-biotinyl-L-lysyl-[protein] + malonyl-CoA. It participates in lipid metabolism; malonyl-CoA biosynthesis; malonyl-CoA from acetyl-CoA: step 1/1. Functionally, component of the acetyl coenzyme A carboxylase (ACC) complex. Biotin carboxylase (BC) catalyzes the carboxylation of biotin on its carrier protein (BCCP) and then the CO(2) group is transferred by the transcarboxylase to acetyl-CoA to form malonyl-CoA. The protein is Acetyl-coenzyme A carboxylase carboxyl transferase subunit beta, chloroplastic of Cryptomeria japonica (Japanese cedar).